The chain runs to 174 residues: Putative serine protease 46 (174 aa).

The Peptidase S1 domain maps to 43–174; sequence VVKGKLVEVG…IGWGTTGKKG (132 aa). An intrachain disulfide couples C68 to C84. Residues H83 and D128 each act as charge relay system in the active site.

The protein belongs to the peptidase S1 family.

The sequence is that of Putative serine protease 46 from Homo sapiens (Human).